The sequence spans 150 residues: Ribosome maturation factor RimP (150 aa).

The protein belongs to the RimP family.

It is found in the cytoplasm. Its function is as follows. Required for maturation of 30S ribosomal subunits. This is Ribosome maturation factor RimP from Methylococcus capsulatus (strain ATCC 33009 / NCIMB 11132 / Bath).